The chain runs to 634 residues: Probable potassium transport system protein Kup (634 aa).

Helical transmembrane passes span 19 to 39 (AIGL…TSPL), 62 to 82 (VLSL…VIFV), 113 to 133 (FVVV…MITP), 150 to 170 (GLEH…FLIQ), 177 to 197 (IGIL…ALGV), 225 to 245 (IGVA…ALYA), 259 to 279 (WFLL…ATIL), 291 to 311 (LLAP…ATVI), 349 to 369 (IYIG…VLGF), 379 to 399 (YGVA…VVIW), 406 to 426 (LWLG…FFAA), and 431 to 451 (VIQG…LMST).

Belongs to the HAK/KUP transporter (TC 2.A.72) family.

The protein localises to the cell inner membrane. The enzyme catalyses K(+)(in) + H(+)(in) = K(+)(out) + H(+)(out). Its function is as follows. Transport of potassium into the cell. Likely operates as a K(+):H(+) symporter. This Pseudomonas aeruginosa (strain UCBPP-PA14) protein is Probable potassium transport system protein Kup.